The chain runs to 342 residues: Probable endoglucanase (342 aa).

The N-terminal stretch at 1–20 (MSVMAAMGGAQVLSSTGAFA) is a signal peptide. Glu-57 serves as the catalytic Proton donor. The active-site Nucleophile is the Asp-114.

Belongs to the glycosyl hydrolase 8 (cellulase D) family.

Its subcellular location is the secreted. The enzyme catalyses Endohydrolysis of (1-&gt;4)-beta-D-glucosidic linkages in cellulose, lichenin and cereal beta-D-glucans.. Functionally, enzyme capable of hydrolyzing carboxy-methyl-cellulose (CMC). The polypeptide is Probable endoglucanase (cmcAX) (Novacetimonas hansenii (Komagataeibacter hansenii)).